The chain runs to 174 residues: Adenine phosphoribosyltransferase (174 aa).

It belongs to the purine/pyrimidine phosphoribosyltransferase family. As to quaternary structure, homodimer.

It localises to the cytoplasm. The enzyme catalyses AMP + diphosphate = 5-phospho-alpha-D-ribose 1-diphosphate + adenine. Its pathway is purine metabolism; AMP biosynthesis via salvage pathway; AMP from adenine: step 1/1. Its function is as follows. Catalyzes a salvage reaction resulting in the formation of AMP, that is energically less costly than de novo synthesis. This is Adenine phosphoribosyltransferase from Nitrosomonas europaea (strain ATCC 19718 / CIP 103999 / KCTC 2705 / NBRC 14298).